We begin with the raw amino-acid sequence, 125 residues long: Cardioactive peptide (125 aa).

The signal sequence occupies residues 1–22; that stretch reads MTVSRVCLLLLVALVYLDCCYA. Residues 23 to 42 constitute a propeptide that is removed on maturation; that stretch reads ASIPRNFDPRLSEEIVMAPK. Cysteines 47 and 53 form a disulfide. C53 carries the post-translational modification Cysteine amide. A propeptide spanning residues 57–125 is cleaved from the precursor; that stretch reads RSQGPPGMPA…RRKQKEAYIQ (69 aa).

As to expression, abdominal perivisceral organ; major neurohemal release site. Expressed in 116 neurons in post-embryonic central nervous system. Nine pairs of cells are observed in the brain, 4.5 pairs in the subesophageal ganglion, three pairs in each thoracic ganglion (T1-T3), three pairs in the first abdominal ganglion (A1), five pairs each in the second to sixth abdominal ganglia (A2-A6) and 7.5 pairs in the terminal ganglion. Expressed in every ganglion in each post-embryonic stage, except in the thoracic ganglia of first- and second-instar larvae. Colocalizes with CAP2b in median neurosecretory cells during the last larval instar through to adults.

It localises to the secreted. In terms of biological role, cardioregulatory neurohormone that increases heart beat rate during adult wing inflation; has no effect on beat amplitude. The effect of CCAP is both ino- and chronotropic. The polypeptide is Cardioactive peptide (Manduca sexta (Tobacco hawkmoth)).